Reading from the N-terminus, the 148-residue chain is Truncated transcription factor CAULIFLOWER C (148 aa).

The 61-residue stretch at 1 to 61 folds into the MADS-box domain; that stretch reads MGRGRVEMKR…GKLFEYSSES (61 aa). In terms of domain architecture, K-box; partial spans 90 to 148; it reads QTNWSMEYSRLKAKIELWERNQRHYLGEDLESISIKELQNLEQQLDTSLKHIPSRKVCK.

In terms of assembly, homodimer capable of binding to CArG-box sequences.

It is found in the nucleus. In terms of biological role, probable transcription factor that promotes early floral meristem identity in synergy with APETALA1, FRUITFULL and LEAFY. Is required subsequently for the transition of an inflorescence meristem into a floral meristem. Seems to be partially redundant to the function of APETALA1. This is Truncated transcription factor CAULIFLOWER C (CAL-C) from Brassica oleracea var. botrytis (Cauliflower).